Reading from the N-terminus, the 224-residue chain is UPF0111 protein TC_0063 (224 aa).

This sequence belongs to the UPF0111 family.

The sequence is that of UPF0111 protein TC_0063 from Chlamydia muridarum (strain MoPn / Nigg).